Consider the following 349-residue polypeptide: Succinylglutamate desuccinylase (349 aa).

Zn(2+) is bound by residues H70, E73, and H166. E229 is a catalytic residue.

This sequence belongs to the AspA/AstE family. Succinylglutamate desuccinylase subfamily. Zn(2+) serves as cofactor.

It catalyses the reaction N-succinyl-L-glutamate + H2O = L-glutamate + succinate. It participates in amino-acid degradation; L-arginine degradation via AST pathway; L-glutamate and succinate from L-arginine: step 5/5. Its function is as follows. Transforms N(2)-succinylglutamate into succinate and glutamate. The sequence is that of Succinylglutamate desuccinylase from Burkholderia thailandensis (strain ATCC 700388 / DSM 13276 / CCUG 48851 / CIP 106301 / E264).